The primary structure comprises 469 residues: DNA (cytosine-5-)-methyltransferase M.ApeKI (469 aa).

Residues 4-469 (YSTISLFSGA…EALAEVLDAV (466 aa)) form the SAM-dependent MTase C5-type domain. The active site involves C93.

This sequence belongs to the class I-like SAM-binding methyltransferase superfamily. C5-methyltransferase family.

The enzyme catalyses a 2'-deoxycytidine in DNA + S-adenosyl-L-methionine = a 5-methyl-2'-deoxycytidine in DNA + S-adenosyl-L-homocysteine + H(+). Its function is as follows. Cytosine methylase that recognizes the double-stranded sequence 5'-GC(A/T)GC-3', methylates C-5 position of the second cytosine on both strands, and protects the DNA from cleavage by the ApeKI endonuclease. This chain is DNA (cytosine-5-)-methyltransferase M.ApeKI, found in Aeropyrum pernix (strain ATCC 700893 / DSM 11879 / JCM 9820 / NBRC 100138 / K1).